Here is a 134-residue protein sequence, read N- to C-terminus: Large ribosomal subunit protein uL16c (134 aa).

Positions 1-22 (MLSPKRTRFRKQHRGRMKGISH) are disordered.

It belongs to the universal ribosomal protein uL16 family. In terms of assembly, part of the 50S ribosomal subunit.

The protein localises to the plastid. Its subcellular location is the chloroplast. This chain is Large ribosomal subunit protein uL16c, found in Nicotiana tomentosiformis (Tobacco).